The following is a 143-amino-acid chain: AP-4 complex subunit sigma (143 aa).

This sequence belongs to the adaptor complexes small subunit family. In terms of assembly, adaptor protein complex 4 (AP-4) is a heterotetramer composed of two large adaptins (epsilon-type subunit and beta-type subunit), a medium adaptin (mu-type subunit) and a small adaptin (sigma-type subunit). Interacts with EHD2.

The protein localises to the golgi apparatus. Its subcellular location is the trans-Golgi network. It localises to the membrane. The protein resides in the coated pit. Its function is as follows. Subunit of novel type of clathrin- or non-clathrin-associated protein coat involved in targeting proteins from the trans-Golgi network (TGN) to the endosomal-lysosomal system. This Arabidopsis thaliana (Mouse-ear cress) protein is AP-4 complex subunit sigma.